Here is a 196-residue protein sequence, read N- to C-terminus: Ribonuclease HII (196 aa).

The RNase H type-2 domain occupies Arg9–Glu196. Positions 15, 16, and 107 each coordinate a divalent metal cation.

This sequence belongs to the RNase HII family. The cofactor is Mn(2+). Requires Mg(2+) as cofactor.

It localises to the cytoplasm. The catalysed reaction is Endonucleolytic cleavage to 5'-phosphomonoester.. Functionally, endonuclease that specifically degrades the RNA of RNA-DNA hybrids. The protein is Ribonuclease HII of Aeromonas hydrophila subsp. hydrophila (strain ATCC 7966 / DSM 30187 / BCRC 13018 / CCUG 14551 / JCM 1027 / KCTC 2358 / NCIMB 9240 / NCTC 8049).